Reading from the N-terminus, the 138-residue chain is Small ribosomal subunit protein uS8c (138 aa).

The protein belongs to the universal ribosomal protein uS8 family. As to quaternary structure, part of the 30S ribosomal subunit.

The protein resides in the plastid. It is found in the chloroplast. Functionally, one of the primary rRNA binding proteins, it binds directly to 16S rRNA central domain where it helps coordinate assembly of the platform of the 30S subunit. This is Small ribosomal subunit protein uS8c (rps8) from Oenothera elata subsp. hookeri (Hooker's evening primrose).